We begin with the raw amino-acid sequence, 780 residues long: Gelsolin (780 aa).

Position 1 is an N-acetylmethionine; alternate (Met-1). A signal peptide spans 1 to 25; sequence MAPYRSSLLCALLLLALCALSPSHA. The tract at residues 51–174 is actin-severing; that stretch reads VVEHPEFLKA…YKKGGVASGF (124 aa). A Gelsolin-like 1 repeat occupies 74–155; the sequence is FDLVPVPPNL…EVQGFESSTF (82 aa). Tyr-84 carries the post-translational modification Phosphotyrosine. Positions 90, 91, 122, 134, 139, and 141 each coordinate Ca(2+). The tract at residues 121–124 is actin-actin interfilament contact point; sequence DESG. 160 to 167 provides a ligand contact to a 1,2-diacyl-sn-glycero-3-phospho-(1D-myo-inositol-4,5-bisphosphate); the sequence is KSGLKYKK. A Ca(2+)-binding site is contributed by Val-170. 186 to 194 is an a 1,2-diacyl-sn-glycero-3-phospho-(1D-myo-inositol-4,5-bisphosphate) binding site; that stretch reads RLFQVKGRR. A Gelsolin-like 2 repeat occupies 196-268; sequence VRATEVPVSW…SEEGGEPEAM (73 aa). Residues Gly-211 and Asp-212 each contribute to the Ca(2+) site. Cys-213 and Cys-226 are oxidised to a cystine. Glu-234 contributes to the Ca(2+) binding site. Residues 244–269 form a disordered region; it reads GIRDNERSGRAQVHVSEEGGEPEAML. Residues Asp-284, Glu-327, Asp-328, and Glu-352 each contribute to the Ca(2+) site. The Gelsolin-like 3 repeat unit spans residues 315-387; it reads DENPFAQGAL…LPEGGETPLF (73 aa). 2 positions are modified to phosphotyrosine: Tyr-407 and Tyr-463. Residues 432 to 780 are actin-binding, Ca-sensitive; sequence AAQHGMDDDG…LDRALAELAA (349 aa). Residues 453-534 form a Gelsolin-like 4 repeat; that stretch reads SNKVPVDPAT…VQGKEPAHLM (82 aa). 7 residues coordinate Ca(2+): Gly-469, Asp-470, Glu-500, Asp-512, Gly-517, Pro-519, and Thr-549. One copy of the Gelsolin-like 5 repeat lies at 575-640; sequence RAVEVMPKSG…EEGSEPDAFW (66 aa). Lys-582 is modified (N6-acetyllysine). 2 residues coordinate Ca(2+): Asn-589 and Asp-590. Residue Tyr-601 is modified to Phosphotyrosine. Glu-612 contacts Ca(2+). Residue Tyr-649 is modified to Phosphotyrosine. The stretch at 679–754 is one Gelsolin-like 6 repeat; the sequence is IEEVPGELMQ…VRQGFEPPSF (76 aa). Residues Asp-694, Asp-695, and Glu-717 each contribute to the Ca(2+) site. Thr-740 carries the post-translational modification Phosphothreonine.

This sequence belongs to the villin/gelsolin family. In terms of assembly, binds to actin and to fibronectin. Identified in a complex composed of ACTA1, COBL, GSN and TMSB4X. Interacts with the inactive form of EIF2AK2/PKR. Interacts with FLII. Post-translationally, phosphorylated on tyrosine residues in vitro.

Its subcellular location is the cytoplasm. It is found in the cytoskeleton. The protein localises to the secreted. In terms of biological role, calcium-regulated, actin-modulating protein that binds to the plus (or barbed) ends of actin monomers or filaments, preventing monomer exchange (end-blocking or capping). It can promote the assembly of monomers into filaments (nucleation) as well as sever filaments already formed. Plays a role in ciliogenesis. The sequence is that of Gelsolin (Gsn) from Mus musculus (Mouse).